The chain runs to 40 residues: Photosystem II reaction center protein J (40 aa).

The helical transmembrane segment at 8–28 (IPLWIVGTVTGILVIGLIGVF) threads the bilayer.

Belongs to the PsbJ family. PSII is composed of 1 copy each of membrane proteins PsbA, PsbB, PsbC, PsbD, PsbE, PsbF, PsbH, PsbI, PsbJ, PsbK, PsbL, PsbM, PsbT, PsbX, PsbY, PsbZ, Psb30/Ycf12, at least 3 peripheral proteins of the oxygen-evolving complex and a large number of cofactors. It forms dimeric complexes.

The protein localises to the plastid. It is found in the chloroplast thylakoid membrane. Its function is as follows. One of the components of the core complex of photosystem II (PSII). PSII is a light-driven water:plastoquinone oxidoreductase that uses light energy to abstract electrons from H(2)O, generating O(2) and a proton gradient subsequently used for ATP formation. It consists of a core antenna complex that captures photons, and an electron transfer chain that converts photonic excitation into a charge separation. This Coffea arabica (Arabian coffee) protein is Photosystem II reaction center protein J.